The following is a 398-amino-acid chain: MLNSLDLEGRPQDTRVVVAMSGGVDSSATAALLKSQGYDVVGITLQLYDHGAATHRKGACCAGQDIHDARAVAERIGIPHYVLDYESRFRESVIDSFADSYALGETPVPCIECNRSVKFRDLLATARELGASALATGHYVSSRRLDDGSRALICAADRDRDQSYFLFATTREQLDFLRFPLGDMTKPQTRELARQFGLSVADKHDSQDICFVPTGRYTDVVERLKPNAMEPGEIVDLNGHVLGSHPGIVHFTVGQRRGLGIASRAPLYVLRLDAAHRRVVVGPREALRMERIVLRDVNWIGDGAIDQAVGDGLELFVRVRSTRAPQPAWLRAVGGGYEVELVAGEEGVSPGQACVFYDAADGQARVLGGGFIKSAAPRWSADGVRDDAASPALAAMRG.

Residues 19 to 26 (AMSGGVDS) and L45 each bind ATP. C113 functions as the Nucleophile in the catalytic mechanism. C113 and C210 are disulfide-bonded. G137 contributes to the ATP binding site. The tract at residues 160 to 162 (RDQ) is interaction with tRNA. Residue C210 is the Cysteine persulfide intermediate of the active site.

It belongs to the MnmA/TRMU family.

It is found in the cytoplasm. It catalyses the reaction S-sulfanyl-L-cysteinyl-[protein] + uridine(34) in tRNA + AH2 + ATP = 2-thiouridine(34) in tRNA + L-cysteinyl-[protein] + A + AMP + diphosphate + H(+). Catalyzes the 2-thiolation of uridine at the wobble position (U34) of tRNA, leading to the formation of s(2)U34. The sequence is that of tRNA-specific 2-thiouridylase MnmA from Rhodopseudomonas palustris (strain BisB5).